We begin with the raw amino-acid sequence, 103 residues long: Large ribosomal subunit protein bL21 (103 aa).

The protein belongs to the bacterial ribosomal protein bL21 family. In terms of assembly, part of the 50S ribosomal subunit. Contacts protein L20.

This protein binds to 23S rRNA in the presence of protein L20. The chain is Large ribosomal subunit protein bL21 from Aeromonas salmonicida (strain A449).